The primary structure comprises 229 residues: ATP synthase subunit a (229 aa).

6 helical membrane passes run 14–34 (LIAITNSSMMMMLAVAVALIL), 68–88 (YFPFVFTLFIFIVFLNILGLF), 98–118 (IVVTLGLSFSIVIGVTLGGLW), 124–144 (FLSILMPAGAPLALAPLLVLI), 157–179 (GVRLAANLSAGHLLFAILAGFGF), and 189–209 (NIFPVLIMVFISLLEAAVAVI).

The protein belongs to the ATPase A chain family. F-type ATPases have 2 components, CF(1) - the catalytic core - and CF(0) - the membrane proton channel. CF(1) has five subunits: alpha(3), beta(3), gamma(1), delta(1), epsilon(1). CF(0) has three main subunits: a, b and c.

Its subcellular location is the mitochondrion inner membrane. Its function is as follows. Mitochondrial membrane ATP synthase (F(1)F(0) ATP synthase or Complex V) produces ATP from ADP in the presence of a proton gradient across the membrane which is generated by electron transport complexes of the respiratory chain. F-type ATPases consist of two structural domains, F(1) - containing the extramembraneous catalytic core and F(0) - containing the membrane proton channel, linked together by a central stalk and a peripheral stalk. During catalysis, ATP synthesis in the catalytic domain of F(1) is coupled via a rotary mechanism of the central stalk subunits to proton translocation. Key component of the proton channel; it may play a direct role in the translocation of protons across the membrane. This is ATP synthase subunit a (ATPASE6) from Metridium senile (Brown sea anemone).